Here is a 663-residue protein sequence, read N- to C-terminus: F-box protein DAS1 (663 aa).

Positions 46-91 (VFPLTKLPDELMQEVFSHLPQPDRLQLCLVNKRLNKIATKLLYRRI) constitute an F-box domain.

As to quaternary structure, interacts with SKP1. Component of the probable SCF(DAS1) complex containing CDC53, SKP1, RBX1 and DAS1.

It functions in the pathway protein modification; protein ubiquitination. In terms of biological role, substrate recognition component of a SCF (SKP1-CUL1-F-box protein) E3 ubiquitin-protein ligase complex which mediates the ubiquitination and subsequent proteasomal degradation of target proteins. Probably recognizes and binds to phosphorylated target proteins. The sequence is that of F-box protein DAS1 (DAS1) from Saccharomyces cerevisiae (strain ATCC 204508 / S288c) (Baker's yeast).